The following is a 124-amino-acid chain: Large ribosomal subunit protein bL12 (124 aa).

Belongs to the bacterial ribosomal protein bL12 family. As to quaternary structure, homodimer. Part of the ribosomal stalk of the 50S ribosomal subunit. Forms a multimeric L10(L12)X complex, where L10 forms an elongated spine to which 2 to 4 L12 dimers bind in a sequential fashion. Binds GTP-bound translation factors.

Functionally, forms part of the ribosomal stalk which helps the ribosome interact with GTP-bound translation factors. Is thus essential for accurate translation. The polypeptide is Large ribosomal subunit protein bL12 (Bacteroides thetaiotaomicron (strain ATCC 29148 / DSM 2079 / JCM 5827 / CCUG 10774 / NCTC 10582 / VPI-5482 / E50)).